A 156-amino-acid polypeptide reads, in one-letter code: Small ribosomal subunit protein uS7 (156 aa).

This sequence belongs to the universal ribosomal protein uS7 family. In terms of assembly, part of the 30S ribosomal subunit. Contacts proteins S9 and S11.

In terms of biological role, one of the primary rRNA binding proteins, it binds directly to 16S rRNA where it nucleates assembly of the head domain of the 30S subunit. Is located at the subunit interface close to the decoding center, probably blocks exit of the E-site tRNA. The polypeptide is Small ribosomal subunit protein uS7 (Buchnera aphidicola subsp. Acyrthosiphon pisum (strain Tuc7)).